Reading from the N-terminus, the 530-residue chain is PTS system maltose-specific EIICB component (530 aa).

The 431-residue stretch at 1 to 431 folds into the PTS EIIC type-1 domain; sequence MTAKTAPKVT…FNLKTPGRDS (431 aa). 10 helical membrane passes run 22-42, 69-89, 96-116, 138-158, 189-209, 289-309, 321-341, 343-363, 369-389, and 399-419; these read FMLP…GSSL, IGSF…PLGL, VAAF…NFWL, ILGI…GIIV, LVMG…AMGI, FLSQ…ALAM, IKGL…TEPL, FLFL…TGLG, VLGV…VFGI, and MVPV…RFAI. Positions 449-530 constitute a PTS EIIB type-1 domain; that stretch reads GYNVPAILEA…MAGLMHTVQA (82 aa). Cys-471 functions as the Phosphocysteine intermediate; for EIIB activity in the catalytic mechanism.

It localises to the cell inner membrane. The catalysed reaction is D-maltose(out) + N(pros)-phospho-L-histidyl-[protein] = alpha-maltose 6'-phosphate(in) + L-histidyl-[protein]. Functionally, the phosphoenolpyruvate-dependent sugar phosphotransferase system (sugar PTS), a major carbohydrate active transport system, catalyzes the phosphorylation of incoming sugar substrates concomitantly with their translocation across the cell membrane. This system is involved in maltose transport. MalX can also recognize and transport glucose even though this sugar may not represent the natural substrate of the system. This Escherichia coli (strain K12) protein is PTS system maltose-specific EIICB component.